Reading from the N-terminus, the 315-residue chain is Tetraacyldisaccharide 4'-kinase (315 aa).

52-59 contributes to the ATP binding site; the sequence is TVGGTGKT.

This sequence belongs to the LpxK family.

The catalysed reaction is a lipid A disaccharide + ATP = a lipid IVA + ADP + H(+). The protein operates within glycolipid biosynthesis; lipid IV(A) biosynthesis; lipid IV(A) from (3R)-3-hydroxytetradecanoyl-[acyl-carrier-protein] and UDP-N-acetyl-alpha-D-glucosamine: step 6/6. In terms of biological role, transfers the gamma-phosphate of ATP to the 4'-position of a tetraacyldisaccharide 1-phosphate intermediate (termed DS-1-P) to form tetraacyldisaccharide 1,4'-bis-phosphate (lipid IVA). This chain is Tetraacyldisaccharide 4'-kinase, found in Ruthia magnifica subsp. Calyptogena magnifica.